The primary structure comprises 277 residues: 3-methyl-2-oxobutanoate hydroxymethyltransferase (277 aa).

The Mg(2+) site is built by D43 and D82. 3-methyl-2-oxobutanoate is bound by residues 43–44, D82, and K112; that span reads DS. A Mg(2+)-binding site is contributed by E114. Catalysis depends on E181, which acts as the Proton acceptor.

It belongs to the PanB family. As to quaternary structure, homodecamer; pentamer of dimers. It depends on Mg(2+) as a cofactor.

The protein resides in the cytoplasm. It carries out the reaction 3-methyl-2-oxobutanoate + (6R)-5,10-methylene-5,6,7,8-tetrahydrofolate + H2O = 2-dehydropantoate + (6S)-5,6,7,8-tetrahydrofolate. Its pathway is cofactor biosynthesis; (R)-pantothenate biosynthesis; (R)-pantoate from 3-methyl-2-oxobutanoate: step 1/2. Catalyzes the reversible reaction in which hydroxymethyl group from 5,10-methylenetetrahydrofolate is transferred onto alpha-ketoisovalerate to form ketopantoate. The sequence is that of 3-methyl-2-oxobutanoate hydroxymethyltransferase from Bacillus subtilis (strain 168).